A 110-amino-acid polypeptide reads, in one-letter code: UPF0102 protein Abu_0255 (110 aa).

It belongs to the UPF0102 family.

This chain is UPF0102 protein Abu_0255, found in Aliarcobacter butzleri (strain RM4018) (Arcobacter butzleri).